Consider the following 319-residue polypeptide: Beta-ketoacyl-[acyl-carrier-protein] synthase III (319 aa).

Catalysis depends on residues cysteine 113 and histidine 246. Positions 247–251 (QANRR) are ACP-binding. Asparagine 276 is an active-site residue.

This sequence belongs to the thiolase-like superfamily. FabH family. In terms of assembly, homodimer.

The protein resides in the cytoplasm. The catalysed reaction is malonyl-[ACP] + acetyl-CoA + H(+) = 3-oxobutanoyl-[ACP] + CO2 + CoA. It participates in lipid metabolism; fatty acid biosynthesis. Its function is as follows. Catalyzes the condensation reaction of fatty acid synthesis by the addition to an acyl acceptor of two carbons from malonyl-ACP. Catalyzes the first condensation reaction which initiates fatty acid synthesis and may therefore play a role in governing the total rate of fatty acid production. Possesses both acetoacetyl-ACP synthase and acetyl transacylase activities. Its substrate specificity determines the biosynthesis of branched-chain and/or straight-chain of fatty acids. The polypeptide is Beta-ketoacyl-[acyl-carrier-protein] synthase III (Rhizorhabdus wittichii (strain DSM 6014 / CCUG 31198 / JCM 15750 / NBRC 105917 / EY 4224 / RW1) (Sphingomonas wittichii)).